The sequence spans 364 residues: Chorismate synthase (364 aa).

The NADP(+) site is built by R48 and R54. FMN-binding positions include 129-131 (RSS), 243-244 (NA), G288, 303-307 (KPTSS), and R329.

This sequence belongs to the chorismate synthase family. As to quaternary structure, homotetramer. FMNH2 serves as cofactor.

It catalyses the reaction 5-O-(1-carboxyvinyl)-3-phosphoshikimate = chorismate + phosphate. The protein operates within metabolic intermediate biosynthesis; chorismate biosynthesis; chorismate from D-erythrose 4-phosphate and phosphoenolpyruvate: step 7/7. In terms of biological role, catalyzes the anti-1,4-elimination of the C-3 phosphate and the C-6 proR hydrogen from 5-enolpyruvylshikimate-3-phosphate (EPSP) to yield chorismate, which is the branch point compound that serves as the starting substrate for the three terminal pathways of aromatic amino acid biosynthesis. This reaction introduces a second double bond into the aromatic ring system. This chain is Chorismate synthase, found in Chelativorans sp. (strain BNC1).